We begin with the raw amino-acid sequence, 223 residues long: Translation initiation factor 6 (223 aa).

Belongs to the eIF-6 family.

In terms of biological role, binds to the 50S ribosomal subunit and prevents its association with the 30S ribosomal subunit to form the 70S initiation complex. The sequence is that of Translation initiation factor 6 from Sulfurisphaera tokodaii (strain DSM 16993 / JCM 10545 / NBRC 100140 / 7) (Sulfolobus tokodaii).